We begin with the raw amino-acid sequence, 372 residues long: MFANSSANTTSTNSSVLQCPDYRDTHRLHMVVYSLVLATGLPLNALALWVFLRVLRVHSVVSVYMCNLAASDLLFTLSLPLRLSYYAQHHWPFPGFLCQTSGAIFQMNMYGSCLFLMLINVDRYAAIVHPLRLRHLRRPRVARRLCLGVWALILLFAVPAARVHSPSHCTYKNITVRLCFESFSDELWKGRLLPLLLLAEILGFLLPLAAVVYSSGRVFWTLARPDATQSQRRRKTVRLLLANLIIFLLCFVPYNSTLAVYGLLRANLVKNSIQDRDQVRGVLMIMVLLAGANCVLDPLVYYFSAEGFRNTLRNLGAPLNTRPLATNGAAGVLTELPSESTQNTGQDATSQVLLQPATLGTPPDNCSQDSAL.

Residues 1 to 30 (MFANSSANTTSTNSSVLQCPDYRDTHRLHM) are Extracellular-facing. N-linked (GlcNAc...) asparagine glycosylation is found at asparagine 4, asparagine 8, and asparagine 13. A helical membrane pass occupies residues 31–51 (VVYSLVLATGLPLNALALWVF). Residues 52–59 (LRVLRVHS) are Cytoplasmic-facing. The chain crosses the membrane as a helical span at residues 60–80 (VVSVYMCNLAASDLLFTLSLP). At 81–100 (LRLSYYAQHHWPFPGFLCQT) the chain is on the extracellular side. Cysteines 98 and 179 form a disulfide. The chain crosses the membrane as a helical span at residues 101-121 (SGAIFQMNMYGSCLFLMLINV). The Cytoplasmic portion of the chain corresponds to 122-140 (DRYAAIVHPLRLRHLRRPR). The chain crosses the membrane as a helical span at residues 141 to 161 (VARRLCLGVWALILLFAVPAA). Residues 162–191 (RVHSPSHCTYKNITVRLCFESFSDELWKGR) lie on the Extracellular side of the membrane. Asparagine 173 is a glycosylation site (N-linked (GlcNAc...) asparagine). A helical membrane pass occupies residues 192 to 212 (LLPLLLLAEILGFLLPLAAVV). Over 213–243 (YSSGRVFWTLARPDATQSQRRRKTVRLLLAN) the chain is Cytoplasmic. Residues 244–264 (LIIFLLCFVPYNSTLAVYGLL) form a helical membrane-spanning segment. The Extracellular segment spans residues 265–280 (RANLVKNSIQDRDQVR). A helical transmembrane segment spans residues 281-301 (GVLMIMVLLAGANCVLDPLVY). Residues 302-372 (YFSAEGFRNT…PDNCSQDSAL (71 aa)) lie on the Cytoplasmic side of the membrane.

It belongs to the G-protein coupled receptor 1 family.

It localises to the cell membrane. Functionally, receptor for lysophosphatidic acid (LPA), a mediator of diverse cellular activities. In Mus musculus (Mouse), this protein is Lysophosphatidic acid receptor 5 (Lpar5).